A 61-amino-acid polypeptide reads, in one-letter code: Small ribosomal subunit protein uS14B (61 aa).

Zn(2+)-binding residues include Cys24, Cys27, Cys40, and Cys43.

The protein belongs to the universal ribosomal protein uS14 family. Zinc-binding uS14 subfamily. In terms of assembly, part of the 30S ribosomal subunit. Contacts proteins S3 and S10. Requires Zn(2+) as cofactor.

Functionally, binds 16S rRNA, required for the assembly of 30S particles and may also be responsible for determining the conformation of the 16S rRNA at the A site. The polypeptide is Small ribosomal subunit protein uS14B (Saccharopolyspora erythraea (strain ATCC 11635 / DSM 40517 / JCM 4748 / NBRC 13426 / NCIMB 8594 / NRRL 2338)).